Here is a 92-residue protein sequence, read N- to C-terminus: Kappa-scoloptoxin(15)-Ssd2a (92 aa).

The first 20 residues, 1–20 (MKMVYLGLFLIITSCVISSG), serve as a signal peptide directing secretion.

In terms of processing, contains 3 disulfide bonds. Expressed by the venom gland.

The protein resides in the secreted. Its function is as follows. Inhibits voltage-gated potassium channels (Kv) (IC(50)=about 10 nM), when tested on DRG neurons. This chain is Kappa-scoloptoxin(15)-Ssd2a, found in Scolopendra dehaani (Thai centipede).